A 452-amino-acid chain; its full sequence is GTPase Der (452 aa).

2 consecutive EngA-type G domains span residues 9–170 and 185–362; these read KIIA…PEED and LQIV…KTWN. GTP contacts are provided by residues 15-22, 62-66, 124-127, 191-198, 238-242, and 303-306; these read GRPNVGKS, DTPGL, NKCE, GRPNAGKS, DTAGL, and NKWD. The KH-like domain occupies 363–448; it reads KKITTSKLNE…PIRFNYIKTK (86 aa).

It belongs to the TRAFAC class TrmE-Era-EngA-EngB-Septin-like GTPase superfamily. EngA (Der) GTPase family. In terms of assembly, associates with the 50S ribosomal subunit.

GTPase that plays an essential role in the late steps of ribosome biogenesis. The chain is GTPase Der from Rickettsia bellii (strain RML369-C).